The primary structure comprises 72 residues: Translation initiation factor IF-1 (72 aa).

The S1-like domain occupies M1–R72.

The protein belongs to the IF-1 family. As to quaternary structure, component of the 30S ribosomal translation pre-initiation complex which assembles on the 30S ribosome in the order IF-2 and IF-3, IF-1 and N-formylmethionyl-tRNA(fMet); mRNA recruitment can occur at any time during PIC assembly.

The protein resides in the cytoplasm. Functionally, one of the essential components for the initiation of protein synthesis. Stabilizes the binding of IF-2 and IF-3 on the 30S subunit to which N-formylmethionyl-tRNA(fMet) subsequently binds. Helps modulate mRNA selection, yielding the 30S pre-initiation complex (PIC). Upon addition of the 50S ribosomal subunit IF-1, IF-2 and IF-3 are released leaving the mature 70S translation initiation complex. In Solibacter usitatus (strain Ellin6076), this protein is Translation initiation factor IF-1.